The chain runs to 323 residues: HPr kinase/phosphorylase (323 aa).

Residues histidine 146 and lysine 167 contribute to the active site. 161-168 (GESGLGKS) lines the ATP pocket. Serine 168 serves as a coordination point for Mg(2+). Aspartate 185 acts as the Proton acceptor; for phosphorylation activity. Proton donor; for dephosphorylation activity in catalysis. The tract at residues 209-218 (LEVRGLGLLD) is important for the catalytic mechanism of both phosphorylation and dephosphorylation. Glutamate 210 provides a ligand contact to Mg(2+). Arginine 250 is a catalytic residue. An important for the catalytic mechanism of dephosphorylation region spans residues 271–276 (QVAAGR).

The protein belongs to the HPrK/P family. Homohexamer. Mg(2+) is required as a cofactor.

The enzyme catalyses [HPr protein]-L-serine + ATP = [HPr protein]-O-phospho-L-serine + ADP + H(+). It carries out the reaction [HPr protein]-O-phospho-L-serine + phosphate + H(+) = [HPr protein]-L-serine + diphosphate. Functionally, catalyzes the ATP- as well as the pyrophosphate-dependent phosphorylation of a specific serine residue in HPr, a phosphocarrier protein of the phosphoenolpyruvate-dependent sugar phosphotransferase system (PTS). HprK/P also catalyzes the pyrophosphate-producing, inorganic phosphate-dependent dephosphorylation (phosphorolysis) of seryl-phosphorylated HPr (P-Ser-HPr). This chain is HPr kinase/phosphorylase, found in Cupriavidus pinatubonensis (strain JMP 134 / LMG 1197) (Cupriavidus necator (strain JMP 134)).